A 631-amino-acid polypeptide reads, in one-letter code: Polycomb group protein EMBRYONIC FLOWER 2 (631 aa).

A C2H2-type zinc finger spans residues 324 to 347 (FSCPFCLVKCASFKGLRYHLPSTH). Residues 424 to 446 (DDAHSVRSEKSRIPPGKHYERIG) show a composition bias toward basic and acidic residues. The tract at residues 424–465 (DDAHSVRSEKSRIPPGKHYERIGGAESGQRVPPGTSPADVQS) is disordered. Positions 505 to 583 (RQFFHSHRAQ…GHIPWACEAF (79 aa)) are VEFS-box.

This sequence belongs to the VEFS (VRN2-EMF2-FIS2-SU(Z)12) family. As to quaternary structure, in plants, PcG complexes are probably composed of a member of the EZ family (CLF or MEA), FIE, and a member of the VEFS family (FIS2, VRN2 or EMF2). Binds to ALP1. In terms of tissue distribution, widely expressed throughout the life cycle with higher levels in proliferating tissues. Expressed in both vegetative and the reproductive shoot meristems.

It localises to the nucleus. In terms of biological role, polycomb group (PcG) protein. Involved in flowering processes by repressing unknown target genes and preventing reproductive development. Participates in polycomb group (PcG) protein complex-mediated (probably in complex with EMF1) silencing of the flower homeotic genes AGAMOUS (AG), PISTILLATA (PI), and APETALA3 (AP3), as well as of some regulatory genes such as ABSCISIC ACID INSENSITIVE3 (ABI3), LONG VEGETATIVE PHASE1 (LOV1), and FLOWERING LOCUS C (FLC) during vegetative development, by mediating trimethylation of histone 3 lysine 27 on the AG chromatin (H3K27me3). PcG proteins act by forming multiprotein complexes, which are required to maintain the transcriptionally repressive state of homeotic genes throughout development. PcG proteins are not required to initiate repression, but to maintain it during later stages of development. They probably act via the methylation of histones, rendering chromatin heritably changed in its expressibility. The protein is Polycomb group protein EMBRYONIC FLOWER 2 (EMF2) of Arabidopsis thaliana (Mouse-ear cress).